The chain runs to 170 residues: MALLPILEFPDPRLRTKAVRVGVAEVVSSSFQTLLDDMFETMYAAPGIGLAATQVNVHQRFMVIDVSEEKNVPMVFINPEIVTREGDQVFQEGCLSVPGIHADVTRALSIVVRFLDRHGDEQQLTAEGLLAVCIQHEMDHLDGKLFIDYLSPLKRDMVRRKLEKQRRRAS.

Residues C94 and H136 each coordinate Fe cation. Residue E137 is part of the active site. Residue H140 participates in Fe cation binding.

It belongs to the polypeptide deformylase family. Fe(2+) serves as cofactor.

It carries out the reaction N-terminal N-formyl-L-methionyl-[peptide] + H2O = N-terminal L-methionyl-[peptide] + formate. In terms of biological role, removes the formyl group from the N-terminal Met of newly synthesized proteins. Requires at least a dipeptide for an efficient rate of reaction. N-terminal L-methionine is a prerequisite for activity but the enzyme has broad specificity at other positions. This Xylella fastidiosa (strain 9a5c) protein is Peptide deformylase.